The sequence spans 151 residues: Putative truncated GMC-type inactive oxidoreductase L893 (151 aa).

This sequence belongs to the GMC oxidoreductase family.

It localises to the virion. The chain is Putative truncated GMC-type inactive oxidoreductase L893 from Acanthamoeba polyphaga (Amoeba).